Reading from the N-terminus, the 430-residue chain is Asparagine--tRNA ligase (430 aa).

The protein belongs to the class-II aminoacyl-tRNA synthetase family. In terms of assembly, homodimer.

Its subcellular location is the cytoplasm. It catalyses the reaction tRNA(Asn) + L-asparagine + ATP = L-asparaginyl-tRNA(Asn) + AMP + diphosphate + H(+). This chain is Asparagine--tRNA ligase, found in Staphylococcus aureus (strain MW2).